The following is a 140-amino-acid chain: uncharacterized protein (140 aa).

Asn-27 is a glycosylation site (N-linked (GlcNAc...) asparagine). 3 helical membrane-spanning segments follow: residues 45-65 (FSLY…GVYA), 76-96 (VWIF…TGTV), and 116-136 (VPLC…YSMV).

Belongs to the TMEM170 family.

It localises to the membrane. This is an uncharacterized protein from Saccharomyces cerevisiae (strain ATCC 204508 / S288c) (Baker's yeast).